A 571-amino-acid chain; its full sequence is S100P-binding protein (571 aa).

Residues 270–280 are compositionally biased toward acidic residues; that stretch reads SDIPFDGDIDE. Disordered stretches follow at residues 270-312 and 356-385; these read SDIP…LESV and NGQN…CSQS. Positions 299-309 are enriched in polar residues; it reads TSESTPASSEL. The segment covering 365–378 has biased composition (pro residues); sequence PLPPSDTAPGPQLP.

It localises to the nucleus. This is S100P-binding protein (s100pbp) from Xenopus tropicalis (Western clawed frog).